Here is an 869-residue protein sequence, read N- to C-terminus: Phosphatidylethanolamine N-methyltransferase (869 aa).

Ser2 is modified (N-acetylserine). The Lumenal portion of the chain corresponds to Ser2–Ser55. Residues Leu56 to Phe76 traverse the membrane as a helical segment. The Cytoplasmic segment spans residues Gln77–Tyr86. Residues Phe87–Leu107 traverse the membrane as a helical segment. At His108 to Gln187 the chain is on the lumenal side. Residues Phe188 to Ile208 traverse the membrane as a helical segment. At Pro209–Trp212 the chain is on the cytoplasmic side. A helical transmembrane segment spans residues Val213–Val233. At Lys234 to Glu258 the chain is on the lumenal side. The chain crosses the membrane as a helical span at residues Leu259–Gly279. Topologically, residues Tyr280–Lys291 are cytoplasmic. Residues Val292–Val310 form a helical membrane-spanning segment. The Lumenal portion of the chain corresponds to Glu311–Arg362. The helical transmembrane segment at Phe363–Ala383 threads the bilayer. Residues Arg384–Asn389 are Cytoplasmic-facing. The chain crosses the membrane as a helical span at residues Tyr390 to Leu410. Residues Tyr411–Phe439 lie on the Lumenal side of the membrane. A helical transmembrane segment spans residues Ile440 to Ile460. At Trp461–Asn463 the chain is on the cytoplasmic side. Residues Phe464–Trp484 form a helical membrane-spanning segment. The Lumenal portion of the chain corresponds to Cys485 to Gly534. Residues Val535–Trp555 form a helical membrane-spanning segment. Residues Thr556–Ala869 lie on the Cytoplasmic side of the membrane.

It belongs to the class VI-like SAM-binding methyltransferase superfamily. CHO2 family.

It is found in the endoplasmic reticulum membrane. It catalyses the reaction a 1,2-diacyl-sn-glycero-3-phosphoethanolamine + S-adenosyl-L-methionine = a 1,2-diacyl-sn-glycero-3-phospho-N-methylethanolamine + S-adenosyl-L-homocysteine + H(+). The protein operates within phospholipid metabolism; phosphatidylcholine biosynthesis. Functionally, catalyzes the first step of the methylation pathway of phosphatidylcholine biosynthesis, the SAM-dependent methylation of phosphatidylethanolamine (PE) to phosphatidylmonomethylethanolamine (PMME). The chain is Phosphatidylethanolamine N-methyltransferase (CHO2) from Saccharomyces cerevisiae (strain AWRI1631) (Baker's yeast).